A 122-amino-acid chain; its full sequence is Large ribosomal subunit protein uL14 (122 aa).

The protein belongs to the universal ribosomal protein uL14 family. Part of the 50S ribosomal subunit. Forms a cluster with proteins L3 and L19. In the 70S ribosome, L14 and L19 interact and together make contacts with the 16S rRNA in bridges B5 and B8.

Functionally, binds to 23S rRNA. Forms part of two intersubunit bridges in the 70S ribosome. The polypeptide is Large ribosomal subunit protein uL14 (Lactobacillus delbrueckii subsp. bulgaricus (strain ATCC 11842 / DSM 20081 / BCRC 10696 / JCM 1002 / NBRC 13953 / NCIMB 11778 / NCTC 12712 / WDCM 00102 / Lb 14)).